A 126-amino-acid chain; its full sequence is Thioredoxin H-type 1 (126 aa).

One can recognise a Thioredoxin domain in the interval 2 to 120 (AANDATSSEE…LQQTIVKHAA (119 aa)). Residues Cys46 and Cys49 each act as nucleophile in the active site. A disulfide bridge links Cys46 with Cys49.

It belongs to the thioredoxin family. Plant H-type subfamily.

Its subcellular location is the cytoplasm. In terms of biological role, participates in various redox reactions through the reversible oxidation of the active center dithiol to a disulfide. The H form is known to activate a number of cytosolic enzymes. The protein is Thioredoxin H-type 1 of Nicotiana tabacum (Common tobacco).